Reading from the N-terminus, the 338-residue chain is Erlin-2 (338 aa).

At 1-3 (MAQ) the chain is on the cytoplasmic side. A helical membrane pass occupies residues 4–24 (LGAVVAVAASFFCASLFSAVH). Over 25 to 338 (KIEEGHIGVY…DEPMEADSEN (314 aa)) the chain is Lumenal. N-linked (GlcNAc...) asparagine glycosylation occurs at Asn-106. The interval 177 to 309 (EAIRRNYELM…DIPNMFMDSA (133 aa)) is interaction with ERLIN1. At Lys-267 the chain carries N6-acetyllysine.

The protein belongs to the band 7/mec-2 family. Forms a heteromeric complex with ERLIN1. In complex with ERLIN1, interacts with RNF170. Interacts with activated ITPR1, independently of the degree of ITPR1 polyubiquitination. Interacts with SCAP, INSIG1, SREBF1 and SREBF2 under cholesterol sufficiency conditions; indicative for an association with the SCAP-SREBP-INSIG complex. Probably part of an AMFR/gp78 and INSIG1-containing ubiquitin ligase complex involved in ERAD of HMGCR. Interacts with TMUB1; TMUB1 bridges the association with AMFR. Interacts with SYVN1 and RNF139. Interacts with TMEM259. Interacts with TMEM41B. Post-translationally, deubiquitinated by USP25; leading to stabilization.

Its subcellular location is the endoplasmic reticulum membrane. In terms of biological role, component of the ERLIN1/ERLIN2 complex which mediates the endoplasmic reticulum-associated degradation (ERAD) of inositol 1,4,5-trisphosphate receptors (IP3Rs) such as ITPR1. Promotes sterol-accelerated ERAD of HMGCR probably implicating an AMFR/gp78-containing ubiquitin ligase complex. Involved in regulation of cellular cholesterol homeostasis by regulation the SREBP signaling pathway. May promote ER retention of the SCAP-SREBF complex. The polypeptide is Erlin-2 (ERLIN2) (Bos taurus (Bovine)).